A 181-amino-acid chain; its full sequence is Ribulose bisphosphate carboxylase small subunit, chloroplastic 1 (181 aa).

A chloroplast-targeting transit peptide spans 1–54 (MASSMLSSAAVVTSPAQATMVAPFTGLKSSSAFPVTRKANNDITSIVSNGGRVS).

The protein belongs to the RuBisCO small chain family. As to quaternary structure, heterohexadecamer of 8 large and 8 small subunits.

Its subcellular location is the plastid. The protein resides in the chloroplast. In terms of biological role, ruBisCO catalyzes two reactions: the carboxylation of D-ribulose 1,5-bisphosphate, the primary event in carbon dioxide fixation, as well as the oxidative fragmentation of the pentose substrate. Both reactions occur simultaneously and in competition at the same active site. Although the small subunit is not catalytic it is essential for maximal activity. The sequence is that of Ribulose bisphosphate carboxylase small subunit, chloroplastic 1 from Brassica napus (Rape).